A 330-amino-acid polypeptide reads, in one-letter code: MKEMVSSSTFRAPGGLGFLGPSKIGLIPLRNRSGVRSRVKYIAPKCAVSSARPASQPRFIQHKKEAFWFYRFLSIVYDHVINPGHWTEDMRDDALEPAELYHHGLKVVDVGGGTGFTTLGIVKHVDNENVTLLDQSPHQLEKARQKVALNGVNIIEGDAEDLPYPTDTFDRYVSAGSIEYWPDPQRGIREAYRVLKLGGVACLIGPVHPTFWLSRFFADMWMLFPKEEEYIEWFQKAGFQDVKIKRIGPKWYRGVRRHGLIMGCSVTGVKRSSGDSPLQLGPKAEDVEKPVNPFTFIFRFVMGTICASYYVLVPIYMWMKDQIVPKDQPI.

The transit peptide at 1-45 directs the protein to the chloroplast; the sequence is MKEMVSSSTFRAPGGLGFLGPSKIGLIPLRNRSGVRSRVKYIAPK. Residues 46-295 are Chloroplast intermembrane-facing; it reads CAVSSARPAS…DVEKPVNPFT (250 aa). Positions 107–116 are SAM motif I; that stretch reads VVDVGGGTGF. An SAM motif II region spans residues 152–165; the sequence is VNIIEGDAEDLPYP. The interval 193 to 206 is SAM motif III; it reads RVLKLGGVACLIGP. A helical membrane pass occupies residues 296–316; sequence FIFRFVMGTICASYYVLVPIY. The Stromal portion of the chain corresponds to 317–330; that stretch reads MWMKDQIVPKDQPI.

Belongs to the class I-like SAM-binding methyltransferase superfamily. MPBQ/MBSQ MT family.

Its subcellular location is the plastid. It localises to the chloroplast inner membrane. It carries out the reaction 2-methyl-6-phytyl-1,4-benzene-1,4-diol + S-adenosyl-L-methionine = 2,3-dimethyl-6-phytylbenzene-1,4-diol + S-adenosyl-L-homocysteine + H(+). The catalysed reaction is 2-methyl-6-(all-trans-nonaprenyl)benzene-1,4-diol + S-adenosyl-L-methionine = plastoquinol-9 + S-adenosyl-L-homocysteine + H(+). The enzyme catalyses 6-geranylgeranyl-2-methylbenzene-1,4-diol + S-adenosyl-L-methionine = 6-geranylgeranyl-2,3-dimethylbenzene-1,4-diol + S-adenosyl-L-homocysteine + H(+). The protein operates within cofactor biosynthesis; tocopherol biosynthesis. Its function is as follows. Involved in a key methylation step in both tocopherols (vitamin E) and plastoquinone synthesis. Catalyzes the conversion of 2-methyl-6-phytyl-1,4-hydroquinone (MPBQ) to 2,3-dimethyl-6-phytyl-1,4-hydroquinone (DMPQ, a substrate for tocopherol cyclase), and 2-methyl-6-solanyl-1,4-benzoquinone (MSBQ) to plastoquinone. The sequence is that of 2-methyl-6-phytyl-1,4-hydroquinone methyltransferase 1, chloroplastic (ARSM2) from Oryza sativa subsp. japonica (Rice).